The primary structure comprises 302 residues: 4-hydroxy-tetrahydrodipicolinate synthase (302 aa).

Residue threonine 55 coordinates pyruvate. The active-site Proton donor/acceptor is tyrosine 144. Lysine 172 (schiff-base intermediate with substrate) is an active-site residue. Valine 214 is a binding site for pyruvate.

It belongs to the DapA family. In terms of assembly, homotetramer; dimer of dimers.

It is found in the cytoplasm. The catalysed reaction is L-aspartate 4-semialdehyde + pyruvate = (2S,4S)-4-hydroxy-2,3,4,5-tetrahydrodipicolinate + H2O + H(+). Its pathway is amino-acid biosynthesis; L-lysine biosynthesis via DAP pathway; (S)-tetrahydrodipicolinate from L-aspartate: step 3/4. Its function is as follows. Catalyzes the condensation of (S)-aspartate-beta-semialdehyde [(S)-ASA] and pyruvate to 4-hydroxy-tetrahydrodipicolinate (HTPA). The polypeptide is 4-hydroxy-tetrahydrodipicolinate synthase (Parasynechococcus marenigrum (strain WH8102)).